The sequence spans 311 residues: MKNLSVVTQFILLGIPHTEGVETMLFVLFFSFYIFTLVGNLLILLAIVSSSRLHTPMYFFLCQLSVCDIFFPSVSSPKMLFYLSGNTPAISYAGCVSQLFFYHFLGGTECFLYTVMAYDRFVAICYPLRYSVIMSHRICAFLAMGTAVFGCIHSTFLTTLTFQLPYCGPKDVNYYFCDIPVVMKLACADTSTLEMVGFISVGLMPLSCFFFILTSYSCIVRSILQIRSTEGRHRAFSTCSAHFTAILLFYMPVIFIYLRPTPSPWLDATVQILNNLVTPMLNPLIYSLRNKEVKSSLWTVLHLLCFLPKHL.

At 1-24 (MKNLSVVTQFILLGIPHTEGVETM) the chain is on the extracellular side. Residues 25-45 (LFVLFFSFYIFTLVGNLLILL) traverse the membrane as a helical segment. Residues 46-54 (AIVSSSRLH) lie on the Cytoplasmic side of the membrane. Residues 55-75 (TPMYFFLCQLSVCDIFFPSVS) form a helical membrane-spanning segment. Over 76–95 (SPKMLFYLSGNTPAISYAGC) the chain is Extracellular. Cys-95 and Cys-187 are oxidised to a cystine. A helical membrane pass occupies residues 96-116 (VSQLFFYHFLGGTECFLYTVM). At 117-137 (AYDRFVAICYPLRYSVIMSHR) the chain is on the cytoplasmic side. A helical membrane pass occupies residues 138 to 158 (ICAFLAMGTAVFGCIHSTFLT). At 159 to 192 (TLTFQLPYCGPKDVNYYFCDIPVVMKLACADTST) the chain is on the extracellular side. A helical membrane pass occupies residues 193–213 (LEMVGFISVGLMPLSCFFFIL). The Cytoplasmic portion of the chain corresponds to 214–237 (TSYSCIVRSILQIRSTEGRHRAFS). The helical transmembrane segment at 238–258 (TCSAHFTAILLFYMPVIFIYL) threads the bilayer. Residues 259-271 (RPTPSPWLDATVQ) lie on the Extracellular side of the membrane. Residues 272–288 (ILNNLVTPMLNPLIYSL) traverse the membrane as a helical segment. The Cytoplasmic segment spans residues 289-311 (RNKEVKSSLWTVLHLLCFLPKHL).

This sequence belongs to the G-protein coupled receptor 1 family.

It localises to the cell membrane. Odorant receptor. This Mus musculus (Mouse) protein is Olfactory receptor 10D1B.